Here is a 607-residue protein sequence, read N- to C-terminus: MTTPLSRIRNFSIIAHIDHGKSTLADRLIQFTGGLTEREMSAQVLDNMDIEKERGITIKAQTVRLSYTAKDGETYQLNLMDTPGHVDFAYEVSRSLAACEGALLVVDAAQGVEAQTLANVYQSIEHDHEIVPVINKIDLPAADVDKVKAEIEDIIGLPADDAVLASAKAGIGIEETLEAIVARIPPPRGDAAAPLVAMLVDSWYDPYLGVVILVRVVDGVLKKGQQIKFMQAGTTHLIDRVGCFTPKRTDLVEIGPGEIGFITAQIKDVAQARVGDTVTDAKKPAAAPLPGFKEVQPVVFCGLFPTDANDFEKLRESIQKLRLNDASFSFEMESSAALGFGFRCGFLGLLHLEIIQERLTREYDLDLITTAPSVVYKLKLSHTKNEAAKEVELHNPADMPDPNRIDEIEEPWIEAVIYVPDEYLGPILKLCQDRRGVQKNLTYVGGRAQITYELPLNEVVFDFYDRLKSISRGYASFDYHQIGHRPGDLVKMSILVNNEPVDALSMIVHRGSAESRGRGMCERLKDLIPRHMFKIPIQAAIGGKVIARETIAALRKDVTAKCYGGDATRKKKLLEKQKEGKKRMREYGNVNIPQEAFIAALRMGDDG.

A tr-type G domain is found at 6–188 (SRIRNFSIIA…AIVARIPPPR (183 aa)). GTP-binding positions include 18–23 (DHGKST) and 135–138 (NKID).

The protein belongs to the TRAFAC class translation factor GTPase superfamily. Classic translation factor GTPase family. LepA subfamily.

The protein resides in the cell inner membrane. It catalyses the reaction GTP + H2O = GDP + phosphate + H(+). In terms of biological role, required for accurate and efficient protein synthesis under certain stress conditions. May act as a fidelity factor of the translation reaction, by catalyzing a one-codon backward translocation of tRNAs on improperly translocated ribosomes. Back-translocation proceeds from a post-translocation (POST) complex to a pre-translocation (PRE) complex, thus giving elongation factor G a second chance to translocate the tRNAs correctly. Binds to ribosomes in a GTP-dependent manner. The polypeptide is Elongation factor 4 (Sphingopyxis alaskensis (strain DSM 13593 / LMG 18877 / RB2256) (Sphingomonas alaskensis)).